The chain runs to 235 residues: Leucyl/phenylalanyl-tRNA--protein transferase (235 aa).

Belongs to the L/F-transferase family.

It is found in the cytoplasm. The catalysed reaction is N-terminal L-lysyl-[protein] + L-leucyl-tRNA(Leu) = N-terminal L-leucyl-L-lysyl-[protein] + tRNA(Leu) + H(+). It catalyses the reaction N-terminal L-arginyl-[protein] + L-leucyl-tRNA(Leu) = N-terminal L-leucyl-L-arginyl-[protein] + tRNA(Leu) + H(+). It carries out the reaction L-phenylalanyl-tRNA(Phe) + an N-terminal L-alpha-aminoacyl-[protein] = an N-terminal L-phenylalanyl-L-alpha-aminoacyl-[protein] + tRNA(Phe). Functionally, functions in the N-end rule pathway of protein degradation where it conjugates Leu, Phe and, less efficiently, Met from aminoacyl-tRNAs to the N-termini of proteins containing an N-terminal arginine or lysine. The polypeptide is Leucyl/phenylalanyl-tRNA--protein transferase (Cellvibrio japonicus (strain Ueda107) (Pseudomonas fluorescens subsp. cellulosa)).